We begin with the raw amino-acid sequence, 288 residues long: MTSKAMLYFSYTKPKVWSLLVFVGAIGAVIAIPYFNLHYISLIVLATIAVMLGSMGAEATTNYIDKDIDAVMSRTMKRPLVTGQIKPINGLLFGLVLMFLSIAILAAFGKLYAALFMGIGLFDNVFIYSYLTKRRTPWNIILGGFSGGFPVVIGWYTVTSKFSILPWFLFLLVVVWIPIHVWSLAYRYRDDYNRAHVPMMTSIHNDRISAICISSAAIILFAFSIIPAFFRVMPMVYMILASAIAVPMIFYSIVFVRHPDRKNSLKLFIYSSPYLAIIFVLVLIFRFL.

The next 9 membrane-spanning stretches (helical) occupy residues 16–36, 37–57, 88–108, 111–131, 138–158, 162–182, 210–230, 236–256, and 265–285; these read VWSL…PYFN, LHYI…SMGA, INGL…LAAF, LYAA…YSYL, WNII…WYTV, FSIL…IHVW, AICI…PAFF, VYMI…IVFV, and LKLF…VLIF.

Belongs to the UbiA prenyltransferase family. Protoheme IX farnesyltransferase subfamily.

The protein localises to the cell membrane. It catalyses the reaction heme b + (2E,6E)-farnesyl diphosphate + H2O = Fe(II)-heme o + diphosphate. Its pathway is porphyrin-containing compound metabolism; heme O biosynthesis; heme O from protoheme: step 1/1. In terms of biological role, converts heme B (protoheme IX) to heme O by substitution of the vinyl group on carbon 2 of heme B porphyrin ring with a hydroxyethyl farnesyl side group. The protein is Protoheme IX farnesyltransferase of Thermoplasma acidophilum (strain ATCC 25905 / DSM 1728 / JCM 9062 / NBRC 15155 / AMRC-C165).